The sequence spans 103 residues: Defensin-like protein 290 (103 aa).

Positions M1–A29 are cleaved as a signal peptide. Disulfide bonds link C33-C50, C39-C55, C43-C57, C72-C92, C78-C98, and C84-C100.

The protein belongs to the DEFL family.

The protein resides in the secreted. This chain is Defensin-like protein 290, found in Arabidopsis thaliana (Mouse-ear cress).